The following is a 1393-amino-acid chain: DNA-directed RNA polymerase subunit beta' (1393 aa).

Positions 71, 73, 86, and 89 each coordinate Zn(2+). Mg(2+)-binding residues include Asp462, Asp464, and Asp466. Zn(2+) contacts are provided by Cys811, Cys885, Cys892, and Cys895.

This sequence belongs to the RNA polymerase beta' chain family. In terms of assembly, the RNAP catalytic core consists of 2 alpha, 1 beta, 1 beta' and 1 omega subunit. When a sigma factor is associated with the core the holoenzyme is formed, which can initiate transcription. It depends on Mg(2+) as a cofactor. Zn(2+) is required as a cofactor.

The enzyme catalyses RNA(n) + a ribonucleoside 5'-triphosphate = RNA(n+1) + diphosphate. Its function is as follows. DNA-dependent RNA polymerase catalyzes the transcription of DNA into RNA using the four ribonucleoside triphosphates as substrates. The protein is DNA-directed RNA polymerase subunit beta' of Azorhizobium caulinodans (strain ATCC 43989 / DSM 5975 / JCM 20966 / LMG 6465 / NBRC 14845 / NCIMB 13405 / ORS 571).